The chain runs to 316 residues: DMOA farnesyltransferase nvfB (316 aa).

A run of 9 helical transmembrane segments spans residues 47–67 (VVGV…TILL), 71–91 (LILV…NDVI), 115–135 (WNAV…LSFL), 139–159 (CAIE…GKRF), 162–182 (FPQL…HSLG), 191–211 (PTFF…VVYS), 234–254 (IELL…AAGY), 258–278 (LGIP…LYFL), and 294–314 (KLAC…EYYL).

Belongs to the UbiA prenyltransferase family.

Its subcellular location is the membrane. It carries out the reaction 3,5-dimethylorsellinate + (2E,6E)-farnesyl diphosphate = (3R)-3-farnesyl-6-hydroxy-2,3,5-trimethyl-4-oxocyclohexa-1,5-diene-1-carboxylate + diphosphate + H(+). The protein operates within secondary metabolite biosynthesis; terpenoid biosynthesis. Its function is as follows. DMOA farnesyltransferase; part of the gene cluster that mediates the biosynthesis of novofumigatonin, a heavily oxygenated meroterpenoid containing a unique orthoester moiety. The first step of the pathway is the synthesis of 3,5-dimethylorsellinic acid (DMOA) by the polyketide synthase nvfA via condensation of one acetyl-CoA starter unit with 3 malonyl-CoA units and 2 methylations. DMOA is then converted to farnesyl-DMOA by the farnesyltransferase nvfB. Epoxydation by FAD-dependent monooxygenase nvfK, followed by a protonation-initiated cyclization catalyzed by the terpene cyclase nvfL leads to the production of asnavolin H. The short chain dehydrogenase nvfC then as a 3-OH dehydrogenase of asnovolin H to yield chemesin D. There are two branches to synthesize asnovolin A from chemesin D. In one branch, chemesin D undergoes Baeyer-Villiger oxidation by nvfH, methylation by nvfJ, and enoyl reduction by the nvfM D enoylreductase that reduces the double bond between C-5'and C-6', to form respectively asnovolin I, asnovolin K, and asnovolin A. In the other branch, the methylation precedes the Baeyer-Villiger oxidation and the enoyl reduction to yield asnovolin A via the asnovolin J intermediate. Asnovolin A is further converted to fumigatonoid A by the Fe(II)/2-oxoglutarate-dependent dioxygenase nvfI that catalyzes an endoperoxidation reaction. The alpha/beta hydrolase nvfD then acts as an epimerase that converts fumigatonoid A to its C-5' epimer, which then undergoes spontaneous or nvfD-catalyzed lactonization. The following step utilizes the ketoreductase nvfG to produce fumigatonoid B. The dioxygenase nvfE further converts fumigatonoid B into fumigatonoid C. Finally the Fe(II)/2-oxoglutarate-dependent dioxygenase nvfF catalyzes two rounds of oxidation to transform fumigatonoid C into the end product, novofumigatonin A. This is DMOA farnesyltransferase nvfB from Aspergillus novofumigatus (strain IBT 16806).